A 974-amino-acid polypeptide reads, in one-letter code: UvrABC system protein A (974 aa).

Residue 34–41 (GLSGSGKS) coordinates ATP. ABC transporter domains are found at residues 331 to 610 (WARS…TNSL) and 630 to 959 (ISKT…QFLK). 663-670 (GVSGGGKS) lines the ATP pocket. The C4-type zinc-finger motif lies at 762–788 (CEACQGDGVIKIEMHFLPDVYVTCDVC).

The protein belongs to the ABC transporter superfamily. UvrA family. As to quaternary structure, forms a heterotetramer with UvrB during the search for lesions.

It is found in the cytoplasm. Functionally, the UvrABC repair system catalyzes the recognition and processing of DNA lesions. UvrA is an ATPase and a DNA-binding protein. A damage recognition complex composed of 2 UvrA and 2 UvrB subunits scans DNA for abnormalities. When the presence of a lesion has been verified by UvrB, the UvrA molecules dissociate. This Brucella melitensis biotype 1 (strain ATCC 23456 / CCUG 17765 / NCTC 10094 / 16M) protein is UvrABC system protein A.